A 1310-amino-acid chain; its full sequence is Zinc finger protein 521 (1310 aa).

Over residues 1–10 (MSRRKQAKPR) the composition is skewed to basic residues. The disordered stretch occupies residues 1–46 (MSRRKQAKPRSLKDPNCKLEDTSEDGESPDCKKRQEEGDELEEEEA). A compositionally biased stretch (basic and acidic residues) spans 11-21 (SLKDPNCKLED). The segment at 48-68 (HSCDSCLQVFESLSDITEHKI) adopts a C2H2-type 1; degenerate zinc-finger fold. Positions 82–106 (DPTCSWPASSPSSKDQASPIHGEGF) are disordered. Polar residues predominate over residues 87–97 (WPASSPSSKDQ). C2H2-type zinc fingers lie at residues 119-141 (YPCQ…EQSH), 147-169 (FKCT…IKLH), 175-197 (YHCS…LKTH), 203-225 (YKCA…MQVH), 247-270 (QKCS…AECH), 282-305 (LQCM…EQIH), and 311-333 (NSCN…MDSH). The C2H2-type 9; degenerate zinc finger occupies 404 to 428 (YSCIYCSKQLFSSLAVLQIHLKTMH). C2H2-type zinc fingers lie at residues 436 to 459 (HICQ…KQVH), 476 to 499 (YQCN…RSSH), and 512 to 535 (FFCP…RQVH). A C2H2-type 13; atypical zinc finger spans residues 559 to 584 (YSCSYCTNSPIFNSVLKLNKHIKENH). 7 C2H2-type zinc fingers span residues 633-655 (YICN…LKTH), 663-685 (LTCP…VTIH), 693-716 (YICE…LDMH), 721-744 (FRCT…AVKH), 751-774 (YRCT…KHNH), 782-804 (HKCI…ITTH), and 808-831 (YNCK…REKH). The C2H2-type 21; degenerate zinc finger occupies 885-907 (YGCDICGAAYTMESLLQNHQLRD). 3 C2H2-type zinc fingers span residues 929-951 (YKCN…MQTH), 958-980 (YMCP…KVTH), and 1019-1041 (FRCV…GTFH). The C2H2-type 25; degenerate zinc-finger motif lies at 1064–1082 (YKCASCLKEFRSKQDLVKL). 5 C2H2-type zinc fingers span residues 1138-1161 (TRCS…QTIH), 1194-1216 (YQCI…VANH), 1224-1246 (HECK…LIEH), 1255-1278 (FKCP…FSAH), and 1285-1308 (YDCA…MSQH).

This sequence belongs to the krueppel C2H2-type zinc-finger protein family.

Its subcellular location is the nucleus. Functionally, transcription factor that can both act as an activator or a repressor depending on the context. Involved in BMP signaling and in the regulation of the immature compartment of the hematopoietic system. The sequence is that of Zinc finger protein 521 (znf521) from Xenopus laevis (African clawed frog).